We begin with the raw amino-acid sequence, 292 residues long: GTP cyclohydrolase FolE2 (292 aa).

The protein belongs to the GTP cyclohydrolase IV family.

It catalyses the reaction GTP + H2O = 7,8-dihydroneopterin 3'-triphosphate + formate + H(+). It functions in the pathway cofactor biosynthesis; 7,8-dihydroneopterin triphosphate biosynthesis; 7,8-dihydroneopterin triphosphate from GTP: step 1/1. Converts GTP to 7,8-dihydroneopterin triphosphate. This Staphylococcus epidermidis (strain ATCC 35984 / DSM 28319 / BCRC 17069 / CCUG 31568 / BM 3577 / RP62A) protein is GTP cyclohydrolase FolE2.